The chain runs to 173 residues: Lens fiber membrane intrinsic protein (173 aa).

Topologically, residues 1-3 (MYS) are cytoplasmic. Residues 4–24 (FMGGGLFCAWVGTILLVVATA) form a helical membrane-spanning segment. Over 25–66 (TDHWMQYRLSGAFAHQGLWRYCLGTKCYLQTESIAYWNATRA) the chain is Extracellular. 2 C-linked (Man) tryptophan; partial glycosylation sites follow: Trp-43 and Trp-61. The chain crosses the membrane as a helical span at residues 67–87 (FMILSSLCATSGIIMGIVAFA). The Cytoplasmic portion of the chain corresponds to 88 to 98 (QQPTFTRLSRP). Residues 99–119 (FSAGIMFFASTFFVLLALAIY) form a helical membrane-spanning segment. Residues 120–140 (TGVTVSFLGRRFGDWRFSWSY) lie on the Extracellular side of the membrane. A helical membrane pass occupies residues 141–161 (ILGWVALLMTFFAGIFYMCAY). Residues 162 to 173 (RMHECRRLSTPR) are Cytoplasmic-facing. A Phosphoserine modification is found at Ser-170. Thr-171 carries the phosphothreonine modification.

The protein belongs to the PMP-22/EMP/MP20 family. In terms of assembly, seems to be associated with itself or another lens membrane component via disulfide bonds. In terms of processing, predominantly monophosphorylated on Ser-170. Only about 15% diphosphorylated on both Ser-170 and Thr-171. C-glycosylated. Trp-43 is more extensively C-glycosylated than Trp-61. C-glycosylation may be involved in membrane trafficking. As to expression, eye lens specific.

The protein resides in the membrane. In terms of biological role, present in the thicker 16-17 nm junctions of mammalian lens fiber cells, where it may contribute to cell junctional organization. Acts as a receptor for calmodulin. May play an important role in both lens development and cataractogenesis. This chain is Lens fiber membrane intrinsic protein (LIM2), found in Bos taurus (Bovine).